A 689-amino-acid chain; its full sequence is Probable serine/threonine-protein kinase abkC (689 aa).

Residues 42–79 (NNSGNENYKNFNYNYKNKNNYNNNNNNNNSNSSSNNNG) are disordered. The 433-residue stretch at 257 to 689 (WFDEEPMASG…NNKNNNEKNK (433 aa)) folds into the Protein kinase domain. ATP contacts are provided by residues 263–271 (MASGSVAQV) and lysine 285. Aspartate 417 serves as the catalytic Proton acceptor. Residues 652 to 689 (KQLNNDNNNNNNNNNNNKNNNDNNNKNNNNKNNNEKNK) are disordered. The segment covering 655–683 (NNDNNNNNNNNNNNKNNNDNNNKNNNNKN) has biased composition (low complexity).

It belongs to the protein kinase superfamily. ADCK protein kinase family.

The polypeptide is Probable serine/threonine-protein kinase abkC (abkC) (Dictyostelium discoideum (Social amoeba)).